The chain runs to 316 residues: IDS-like terpene synthase 2 (316 aa).

Mg(2+)-binding residues include aspartate 69 and aspartate 73.

It belongs to the FPP/GGPP synthase family. The cofactor is Mg(2+).

The enzyme catalyses (2E)-geranyl diphosphate + H2O = linalool + diphosphate. The catalysed reaction is (2E,6E)-farnesyl diphosphate + H2O = (6E)-nerolidol + diphosphate. Functionally, terpene synthase that shows monoterpene synthase activity and produces linalool, using geranyl diphosphate (GPP) as substrate. Also shows sesquiterpene synthase activity as it is able to convert farnesyl diphosphate (FPP) into (E)-nerolidol. This is IDS-like terpene synthase 2 from Melampsora larici-populina (strain 98AG31 / pathotype 3-4-7) (Poplar leaf rust fungus).